A 667-amino-acid polypeptide reads, in one-letter code: Zeaxanthin epoxidase, chloroplastic (667 aa).

Residues 1–59 (MGSTPFCYSINPSPSKLDFTRTHVFSPVSKQFYLDLSSFSGKPGGVSGFRSRRALLGVK) constitute a chloroplast transit peptide. FAD is bound by residues 82–110 (RVLVAGGGIGGLVFALAAKKKGFDVLVFE) and 360–373 (GFTWGKGRVTLLGD). The FHA domain occupies 558-612 (CIVGSEPDQDFPGMRIVIPSSQVSKMHARVIYKDGAFFLMDLRSEHGTYVTDNEG).

FAD is required as a cofactor. As to expression, expressed in leaves, stems and flowers, and at lower levels in roots and siliques.

It is found in the plastid. The protein resides in the chloroplast. The catalysed reaction is all-trans-zeaxanthin + 4 reduced [2Fe-2S]-[ferredoxin] + 2 O2 + 4 H(+) = all-trans-violaxanthin + 4 oxidized [2Fe-2S]-[ferredoxin] + 2 H2O. It participates in plant hormone biosynthesis; abscisate biosynthesis. Functionally, zeaxanthin epoxidase that plays an important role in the xanthophyll cycle and abscisic acid (ABA) biosynthesis. Converts zeaxanthin into antheraxanthin and subsequently violaxanthin. Required for resistance to osmotic and drought stresses, ABA-dependent stomatal closure, seed development and dormancy, modulation of defense gene expression and disease resistance and non-photochemical quencing (NPQ). Through its role in ABA biosynthesis, regulates the expression of stress-responsive genes such as RD29A during osmotic stress and is required for normal plant growth during vegetative development. Is required for late skotomorphogenic growth through its role in the xanthophyll carotenoids neoxanthin, violaxanthin and antheraxanthin biosynthesis. Required for beta-aminobutyric acid (BABA)-induced priming in disease resistance, tolerance to salt and drought stresses and sterility. Participates in NPQ by regulating the level of zeaxanthin in photosynthetic energy conversion. NPQ is a process that maintains the balance between dissipation and utilization of light energy to minimize the generation of oxidizing molecules and the molecular damages they can generate. This is Zeaxanthin epoxidase, chloroplastic (ZEP) from Arabidopsis thaliana (Mouse-ear cress).